A 676-amino-acid chain; its full sequence is UvrABC system protein C (676 aa).

Positions 16–95 constitute a GIY-YIG domain; the sequence is VEPGVYRFRD…IKEFDPRFNI (80 aa). One can recognise a UVR domain in the interval 208–243; that stretch reads DRLVRDLERKMTAAAEDLDFERAARLRDDIGALRRA.

This sequence belongs to the UvrC family. Interacts with UvrB in an incision complex.

It is found in the cytoplasm. Functionally, the UvrABC repair system catalyzes the recognition and processing of DNA lesions. UvrC both incises the 5' and 3' sides of the lesion. The N-terminal half is responsible for the 3' incision and the C-terminal half is responsible for the 5' incision. This chain is UvrABC system protein C, found in Mycobacterium sp. (strain JLS).